Consider the following 386-residue polypeptide: MILGSLSRAGPLPLLRQPPIMQPPMDLKQILPFPLEPAPTLGLFSNYSTMDPVQKAVLSHTFGGPLLKTKRPVISCNVCQIRFNSQSQAEAHYKGNRHARRVKGIEAAKTRGREPSVRESGDPAPAGSIPPSGDGVAPRPVSMENGLGPAPGSPEKQPGSPSPPSVPESGQGVTKGEGGTSVPASLPGGSKEEEEKAKRLLYCALCKVAVNSLSQLEAHNKGTKHKTILEARSGLGPIKAYPRLGPPTPGEPEAPAQDRTFHCEICNVKVNSEVQLKQHISSRRHRDGVAGKPNPLLSRHKKPRGAAELAGTLTFSKELPKSLAGGLLPSPLAVAAVMAAAAGSPLSLRPAPAAPLLQGPPITHPLLHPAPGPIRTAHGPILFSPY.

A Matrin-type 1 zinc finger spans residues 74 to 98 (ISCNVCQIRFNSQSQAEAHYKGNRH). The interval 88–193 (QAEAHYKGNR…ASLPGGSKEE (106 aa)) is disordered. Positions 103–121 (KGIEAAKTRGREPSVRESG) are enriched in basic and acidic residues. Residues 145–351 (NGLGPAPGSP…AGSPLSLRPA (207 aa)) are necessary for binding to ITPR1, CEBPA and p53/TP53 mRNAs. Residue S185 is modified to Phosphoserine. The Matrin-type 2 zinc finger occupies 201 to 225 (LYCALCKVAVNSLSQLEAHNKGTKH). At T248 the chain carries Phosphothreonine. The Matrin-type 3 zinc finger occupies 261–285 (FHCEICNVKVNSEVQLKQHISSRRH). A disordered region spans residues 279–305 (HISSRRHRDGVAGKPNPLLSRHKKPRG).

As to quaternary structure, interacts with p53/TP53; the interaction is direct and enhances p53/TP53 transactivation functions on cell-cycle arrest target genes, resulting in growth arrest. Interacts with ELAVL1; the interaction is indirect, mRNA-dependent and may regulate p53/TP53 expression. Post-translationally, ubiquitinated upon prolonged exposure to genotoxic stress, which leads to proteasomal degradation of ZNF385A and releases p53/TP53 from cell-cycle arrest target gene promoters. In terms of tissue distribution, expressed in brain and testis (at protein level). In brain, the expression is located to olfactory bulb, cerebral cortex, hippocampus, satellite cells and Purkinje cells of the cerebellum molecular layer. Detected in bone marrow, white and brown adipose tissue, lung and at lower levels in the thymus.

It is found in the cytoplasm. It localises to the nucleus. Its subcellular location is the nucleolus. The protein resides in the cell projection. The protein localises to the dendrite. In terms of biological role, RNA-binding protein that affects the localization and the translation of a subset of mRNA. May play a role in adipogenesis through binding to the 3'-UTR of CEBPA mRNA and regulation of its translation. Targets ITPR1 mRNA to dendrites in Purkinje cells, and may regulate its activity-dependent translation. With ELAVL1, binds the 3'-UTR of p53/TP53 mRNAs to control their nuclear export induced by CDKN2A. Hence, may regulate p53/TP53 expression and mediate in part the CDKN2A anti-proliferative activity. May also bind CCNB1 mRNA. Alternatively, may also regulate p53/TP53 activity through direct protein-protein interaction. Interacts with p53/TP53 and promotes cell-cycle arrest over apoptosis enhancing preferentially the DNA binding and transactivation of p53/TP53 on cell-cycle arrest target genes over proapoptotic target genes. May also regulate the ubiquitination and stability of CDKN1A promoting DNA damage-induced cell cycle arrest. Also plays a role in megakaryocytes differentiation. The protein is Zinc finger protein 385A (Znf385a) of Mus musculus (Mouse).